The sequence spans 103 residues: MPGRKARRNAPVNPTRAELPPEFAAQLRKIGDKVYCTWSAPDITVVLAQMPGKSQKSRMRSPSPTRVPADLKDECAQLRRIGDKVNLRQKLLNLISKLFNLVT.

2 consecutive short sequence motifs (BH3) follow at residues 27–35 and 78–86; these read LRKIGDKVY and LRRIGDKVN. The interval 90–99 is required for mitochondrial location; sequence KLLNLISKLF.

Belongs to the PMAIP1 family. As to quaternary structure, interacts with MCL1. Interacts with BCL2A1. Interacts with BAX. Interacts with BCL2L10. Detected in thymocytes after irradiation with X-rays. Not detectable in untreated thymocytes (at protein level). Detected in embryonic neural precursor cells of the telencephalon Constitutively expressed at low levels in adult brain, testis, thymus, spleen, lung and kidney.

The protein localises to the mitochondrion. Its function is as follows. Promotes activation of caspases and apoptosis. Promotes mitochondrial membrane changes and efflux of apoptogenic proteins from the mitochondria. Contributes to p53/TP53-dependent apoptosis after radiation exposure. Promotes proteasomal degradation of MCL1. Competes with BIM/BCL2L11 for binding to MCL1 and can displace BIM/BCL2L11 from its binding site on MCL1. Competes with BAK1 for binding to MCL1 and can displace BAK1 from its binding site on MCL1. The chain is Phorbol-12-myristate-13-acetate-induced protein 1 (Pmaip1) from Mus musculus (Mouse).